The chain runs to 277 residues: Probable septum site-determining protein MinC (277 aa).

The tract at residues 137 to 164 (ATTGNAPAEPAPAEPAAPAAAPQPPAVP) is disordered. Pro residues predominate over residues 145–164 (EPAPAEPAAPAAAPQPPAVP).

Belongs to the MinC family. Interacts with MinD and FtsZ.

In terms of biological role, cell division inhibitor that blocks the formation of polar Z ring septums. Rapidly oscillates between the poles of the cell to destabilize FtsZ filaments that have formed before they mature into polar Z rings. Prevents FtsZ polymerization. This chain is Probable septum site-determining protein MinC, found in Bordetella petrii (strain ATCC BAA-461 / DSM 12804 / CCUG 43448).